The chain runs to 597 residues: Adenine deaminase (597 aa).

Belongs to the metallo-dependent hydrolases superfamily. Adenine deaminase family. Mn(2+) is required as a cofactor.

It catalyses the reaction adenine + H2O + H(+) = hypoxanthine + NH4(+). The polypeptide is Adenine deaminase (Paracoccus denitrificans (strain Pd 1222)).